Here is a 405-residue protein sequence, read N- to C-terminus: uncharacterized protein (405 aa).

10 helical membrane passes run valine 9 to valine 29, valine 41 to cysteine 61, valine 74 to threonine 94, glutamine 98 to phenylalanine 118, alanine 138 to glycine 158, leucine 168 to asparagine 190, alanine 227 to histidine 247, tryptophan 252 to isoleucine 272, leucine 291 to leucine 311, and isoleucine 373 to proline 393.

The protein belongs to the major facilitator superfamily. Drug:H(+) antiporter-3 (DHA3) (TC 2.A.1.21) family.

It localises to the cell membrane. This is an uncharacterized protein from Bacillus subtilis (strain 168).